A 239-amino-acid polypeptide reads, in one-letter code: MMASAPQDRPAGTPPQGRGLLIVVTGASGVGKGTLRERWLAGQDVFYSTSWTTREPRPGEVNGRDYVFVSPAEFLAKAQQNGFLEHAQFVGNHYGTPIEPIEAALERGQDVVLEIEVEGAMQVKDRMGEQAILVFIMPPSLTELRRRLTGRATETPERIEKRLTRARDEIQAAHDFRYVIVNDNLDRAVSELLAVQQAERAAQKAAEHWTPEEQQARALADTVRSTALSREALQQVVES.

A Guanylate kinase-like domain is found at 19–197 (GLLIVVTGAS…AVSELLAVQQ (179 aa)). 26 to 33 (GASGVGKG) is an ATP binding site.

It belongs to the guanylate kinase family.

The protein localises to the cytoplasm. It carries out the reaction GMP + ATP = GDP + ADP. Functionally, essential for recycling GMP and indirectly, cGMP. The sequence is that of Guanylate kinase (gmk) from Deinococcus radiodurans (strain ATCC 13939 / DSM 20539 / JCM 16871 / CCUG 27074 / LMG 4051 / NBRC 15346 / NCIMB 9279 / VKM B-1422 / R1).